We begin with the raw amino-acid sequence, 85 residues long: Small ribosomal subunit protein bS18 (85 aa).

A compositionally biased stretch (gly residues) spans 1 to 12 (MAFAQAGGGGGQ). A disordered region spans residues 1 to 22 (MAFAQAGGGGGQRRPFFRRRKT).

The protein belongs to the bacterial ribosomal protein bS18 family. As to quaternary structure, part of the 30S ribosomal subunit. Forms a tight heterodimer with protein bS6.

Its function is as follows. Binds as a heterodimer with protein bS6 to the central domain of the 16S rRNA, where it helps stabilize the platform of the 30S subunit. The protein is Small ribosomal subunit protein bS18 of Azorhizobium caulinodans (strain ATCC 43989 / DSM 5975 / JCM 20966 / LMG 6465 / NBRC 14845 / NCIMB 13405 / ORS 571).